The following is a 341-amino-acid chain: Spore photoproduct lyase (341 aa).

The Radical SAM core domain occupies 76 to 304; that stretch reads SKPSAEYAIP…ESKRKYKWGR (229 aa). [4Fe-4S] cluster contacts are provided by C90, C94, and C97. A DNA-binding region (H-T-H motif) is located at residues 217–234; it reads QAARKVAGAGYKLGFVVA.

It belongs to the radical SAM superfamily. SPL family. Monomer or homodimer. [4Fe-4S] cluster serves as cofactor. The cofactor is S-adenosyl-L-methionine.

The catalysed reaction is (5R)-5,6-dihydro-5-(thymidin-7-yl)thymidine in DNA = a thymidine dimer in DNA. Functionally, involved in repair of UV radiation-induced DNA damage during spore germination. Can repair thymine dimer 5-thyminyl-5,6-dihydrothymine (known as spore photoproduct (SP)) by in situ monomerization of SP to two thymines. The chain is Spore photoproduct lyase (splG) from Geobacillus sp. (strain Y412MC61).